The chain runs to 391 residues: Formate-dependent phosphoribosylglycinamide formyltransferase (391 aa).

N(1)-(5-phospho-beta-D-ribosyl)glycinamide contacts are provided by residues 20–21 (EL) and E80. ATP-binding positions include R112, K153, 158–163 (SSGKGQ), 193–196 (EGFI), and E201. The ATP-grasp domain occupies 117-306 (RLAAEELDLS…EFALHVRAFT (190 aa)). Positions 265 and 277 each coordinate Mg(2+). Residues D284, K354, and 361–362 (RR) each bind N(1)-(5-phospho-beta-D-ribosyl)glycinamide.

The protein belongs to the PurK/PurT family. As to quaternary structure, homodimer.

It carries out the reaction N(1)-(5-phospho-beta-D-ribosyl)glycinamide + formate + ATP = N(2)-formyl-N(1)-(5-phospho-beta-D-ribosyl)glycinamide + ADP + phosphate + H(+). It functions in the pathway purine metabolism; IMP biosynthesis via de novo pathway; N(2)-formyl-N(1)-(5-phospho-D-ribosyl)glycinamide from N(1)-(5-phospho-D-ribosyl)glycinamide (formate route): step 1/1. Its function is as follows. Involved in the de novo purine biosynthesis. Catalyzes the transfer of formate to 5-phospho-ribosyl-glycinamide (GAR), producing 5-phospho-ribosyl-N-formylglycinamide (FGAR). Formate is provided by PurU via hydrolysis of 10-formyl-tetrahydrofolate. This chain is Formate-dependent phosphoribosylglycinamide formyltransferase, found in Vibrio parahaemolyticus serotype O3:K6 (strain RIMD 2210633).